Consider the following 639-residue polypeptide: Kininogen-1 (639 aa).

An N-terminal signal peptide occupies residues 1 to 18 (MKLITILLLCSRLLPSLA). The Cystatin kininogen-type 1 domain occupies 28–132 (CNDESLFQAV…TQICNITPGK (105 aa)). Cystine bridges form between Cys28/Cys609, Cys83/Cys94, Cys107/Cys126, Cys142/Cys145, Cys206/Cys218, Cys229/Cys248, Cys264/Cys267, Cys328/Cys340, and Cys351/Cys370. The N-linked (GlcNAc...) asparagine glycan is linked to Asn82. One can recognise a Cystatin kininogen-type 2 domain in the interval 151-254 (VDSPELGPVL…SDSCEFYPGD (104 aa)). Residues Asn169 and Asn205 are each glycosylated (N-linked (GlcNAc...) asparagine). The Cystatin kininogen-type 3 domain maps to 273-376 (VDSPELKEAL…TVKCKVLDMT (104 aa)). An N-linked (GlcNAc...) asparagine glycan is attached at Asn294. Ser332 carries the phosphoserine modification. 2 disordered regions span residues 438–462 (NHQGHKHGHGIGHGHQKPHGLGHGH) and 476–547 (GYDH…LNPP). The span at 482 to 502 (PVGHGHGQRHGHGHGHGHGRD) shows a compositional bias: basic residues. Residues 503–519 (KHTNKDKNNVKHTDQRR) show a composition bias toward basic and acidic residues. Polar residues predominate over residues 522 to 537 (LTSSSEDNTTSTQIQG). An N-linked (GlcNAc...) asparagine glycan is attached at Asn529.

In terms of processing, bradykinin is released from kininogen by plasma kallikrein. Post-translationally, phosphorylated by FAM20C in the extracellular medium. Bradykinin is inactivated by ACE, which removes the dipeptide Arg-Phe from its C-terminus. In terms of tissue distribution, plasma.

It is found in the secreted. The protein localises to the extracellular space. In terms of biological role, kininogens are inhibitors of thiol proteases. HMW-kininogen plays an important role in blood coagulation by helping to position optimally prekallikrein and factor XI next to factor XII; HMW-kininogen inhibits the thrombin- and plasmin-induced aggregation of thrombocytes. LMW-kininogen inhibits the aggregation of thrombocytes. LMW-kininogen is in contrast to HMW-kininogen not involved in blood clotting. Its function is as follows. The active peptide bradykinin is a potent vasodilatator that is released from HMW-kininogen shows a variety of physiological effects: (A) influence in smooth muscle contraction, (B) induction of hypotension, (C) natriuresis and diuresis, (D) decrease in blood glucose level, (E) it is a mediator of inflammation and causes (E1) increase in vascular permeability, (E2) stimulation of nociceptors (4E3) release of other mediators of inflammation (e.g. prostaglandins), (F) it has a cardioprotective effect (directly via bradykinin action, indirectly via endothelium-derived relaxing factor action). The polypeptide is Kininogen-1 (Kng1) (Rattus norvegicus (Rat)).